The following is a 932-amino-acid chain: MLKALFGDPNTRKLKKFQPYVAEVNLYEEDIEKLSDDELKYKTVEFREALDKARSDAETEEILDEILPEAFAVVREAGKRVLGMRHFDVQLLGGIILHKGQIAEMKTGEGKTLVATLPSYLNGLTGKGVHVVTVNDYLARRDAEWMGQIHRFLGLTVGLVQSGMNPEERKKNYACDITYTTNSELGFDYLRDNMSTAMIEVVQRPFNFCIIDEVDSILIDEARTPLIISGQVERPTEKYLQASDIAAQLEPEIHYEVDEKQRNVLMTDEGFEKAEQLLQTTDLFDKNDPWAHYIFNAIKAKELFLKDVNYIVRNGEVVIVDEFTGRIMVGRRWSDGLHQAIEAKERVEIQKESQTLATITYQNFFLLYPKLSGMTGTAKTEETELEKVYNLQVTITPTNRPSSRQDWPDVVYKNEEAKWKAVALECEELHQQGRPILVGTTSVEKSEVISRLLQSSGIHHNLLNARPENVERESEIVAQAGRKGAVTIATNMAGRGTDIILGGNSDYMARLKVREYLMPKIVRPEDDELGAGVTGWVSGREKPQGFGNQNGKKKVKTWQVSPDIYPTTISQETEDLLKKAVKFAVDQYGLQSLTELEAEDKLAIASEKGPTDDPVILKLREVYNQIRREYEVLTSAEHKEVVELGGLHVIGTERHESRRVDNQLRGRAGRQGDPGSTRFFLSLEDNLLRIFGGDRVAGLMNMFRVEEDMPIESKMLTGSLEGAQKKVETYYYDIRKQVFEYDEVMNNQRKAIYAERRRVLEGLDLKEQVLVYAEKTMDEIVDAYVNPELPPEEWDVENMLDKAKQFVYLLEDLTVEDLGDMTVWEMKTFFHEEVRKAYDLKETQVDKVRPGLMREAERYFILQQIDNLWREHLQSMEALRESIGLRGYGQKDPLIEYKQEGYEMFLEMMIDIRRNVVYSLFQFQPQQQPQAV.

ATP is bound by residues Gln-90, 108 to 112 (GEGKT), and Asp-498.

This sequence belongs to the SecA family. Monomer and homodimer. Part of the essential Sec protein translocation apparatus which comprises SecA, SecYEG and auxiliary proteins SecDF. Other proteins may also be involved.

It localises to the cell inner membrane. The protein resides in the cellular thylakoid membrane. The protein localises to the cytoplasm. The enzyme catalyses ATP + H2O + cellular proteinSide 1 = ADP + phosphate + cellular proteinSide 2.. Part of the Sec protein translocase complex. Interacts with the SecYEG preprotein conducting channel. Has a central role in coupling the hydrolysis of ATP to the transfer of proteins into and across the cell membrane, serving as an ATP-driven molecular motor driving the stepwise translocation of polypeptide chains across the membrane. Functionally, probably participates in protein translocation into and across both the cytoplasmic and thylakoid membranes in cyanobacterial cells. The chain is Protein translocase subunit SecA from Synechocystis sp. (strain ATCC 27184 / PCC 6803 / Kazusa).